A 235-amino-acid chain; its full sequence is Glutathione S-transferase L3 (235 aa).

One can recognise a GST N-terminal domain in the interval 27-108 (GTTRLYTSYV…YLDNTFEGPS (82 aa)). Glutathione is bound by residues 37–38 (CP), 65–66 (NR), 79–80 (KV), and 92–93 (ES). Positions 86–230 (NGKIIGESLD…MDPKEIVEVF (145 aa)) constitute a GST C-terminal domain.

The protein belongs to the GST superfamily. Lambda family.

It localises to the cytoplasm. Its subcellular location is the cytosol. The catalysed reaction is RX + glutathione = an S-substituted glutathione + a halide anion + H(+). Its function is as follows. Catalyzes the glutathione-dependent reduction of S-glutathionylquercetin to quercetin. The protein is Glutathione S-transferase L3 (GSTL3) of Arabidopsis thaliana (Mouse-ear cress).